The primary structure comprises 101 residues: Small ribosomal subunit protein uS17 (101 aa).

Belongs to the universal ribosomal protein uS17 family. Part of the 30S ribosomal subunit.

In terms of biological role, one of the primary rRNA binding proteins, it binds specifically to the 5'-end of 16S ribosomal RNA. This is Small ribosomal subunit protein uS17 from Leifsonia xyli subsp. xyli (strain CTCB07).